Consider the following 184-residue polypeptide: Crossover junction endodeoxyribonuclease RuvC (184 aa).

Residues Asp-11, Glu-73, and Asp-147 contribute to the active site. Asp-11, Glu-73, and Asp-147 together coordinate Mg(2+).

It belongs to the RuvC family. In terms of assembly, homodimer which binds Holliday junction (HJ) DNA. The HJ becomes 2-fold symmetrical on binding to RuvC with unstacked arms; it has a different conformation from HJ DNA in complex with RuvA. In the full resolvosome a probable DNA-RuvA(4)-RuvB(12)-RuvC(2) complex forms which resolves the HJ. Mg(2+) is required as a cofactor.

The protein resides in the cytoplasm. It carries out the reaction Endonucleolytic cleavage at a junction such as a reciprocal single-stranded crossover between two homologous DNA duplexes (Holliday junction).. In terms of biological role, the RuvA-RuvB-RuvC complex processes Holliday junction (HJ) DNA during genetic recombination and DNA repair. Endonuclease that resolves HJ intermediates. Cleaves cruciform DNA by making single-stranded nicks across the HJ at symmetrical positions within the homologous arms, yielding a 5'-phosphate and a 3'-hydroxyl group; requires a central core of homology in the junction. The consensus cleavage sequence is 5'-(A/T)TT(C/G)-3'. Cleavage occurs on the 3'-side of the TT dinucleotide at the point of strand exchange. HJ branch migration catalyzed by RuvA-RuvB allows RuvC to scan DNA until it finds its consensus sequence, where it cleaves and resolves the cruciform DNA. The chain is Crossover junction endodeoxyribonuclease RuvC from Neisseria gonorrhoeae (strain ATCC 700825 / FA 1090).